Reading from the N-terminus, the 803-residue chain is Translation initiation factor IF-2 (803 aa).

2 disordered regions span residues 93-123 and 138-206; these read TKPV…LNEK and EVKE…ASAK. Over residues 111–121 the composition is skewed to polar residues; the sequence is VPPTSDTTNLN. Positions 138–155 are enriched in basic and acidic residues; that stretch reads EVKEEAKKTPSEKKETPK. The span at 156–167 shows a compositional bias: basic residues; it reads KGPRKETRRSRK. A compositionally biased stretch (basic and acidic residues) spans 168-188; it reads PDKEDKWEREELHMTKLVEER. The tr-type G domain occupies 302–471; that stretch reads PRAPVVTIMG…LLQAEVLELK (170 aa). The segment at 311–318 is G1; it reads GHVDHGKT. Position 311–318 (311–318) interacts with GTP; sequence GHVDHGKT. Residues 336–340 form a G2 region; sequence GITQH. Residues 357 to 360 form a G3 region; that stretch reads DTPG. GTP contacts are provided by residues 357–361 and 411–414; these read DTPGH and NKID. Residues 411-414 are G4; the sequence is NKID. A G5 region spans residues 447-449; it reads SAK.

This sequence belongs to the TRAFAC class translation factor GTPase superfamily. Classic translation factor GTPase family. IF-2 subfamily.

It localises to the cytoplasm. One of the essential components for the initiation of protein synthesis. Protects formylmethionyl-tRNA from spontaneous hydrolysis and promotes its binding to the 30S ribosomal subunits. Also involved in the hydrolysis of GTP during the formation of the 70S ribosomal complex. The sequence is that of Translation initiation factor IF-2 from Coxiella burnetii (strain RSA 493 / Nine Mile phase I).